The sequence spans 427 residues: Serine hydroxymethyltransferase (427 aa).

Residues leucine 122 and 126–128 each bind (6S)-5,6,7,8-tetrahydrofolate; that span reads GHL. The residue at position 231 (lysine 231) is an N6-(pyridoxal phosphate)lysine. Position 355 to 357 (355 to 357) interacts with (6S)-5,6,7,8-tetrahydrofolate; sequence SPF.

The protein belongs to the SHMT family. Homodimer. The cofactor is pyridoxal 5'-phosphate.

Its subcellular location is the cytoplasm. The enzyme catalyses (6R)-5,10-methylene-5,6,7,8-tetrahydrofolate + glycine + H2O = (6S)-5,6,7,8-tetrahydrofolate + L-serine. The protein operates within one-carbon metabolism; tetrahydrofolate interconversion. It functions in the pathway amino-acid biosynthesis; glycine biosynthesis; glycine from L-serine: step 1/1. Its function is as follows. Catalyzes the reversible interconversion of serine and glycine with tetrahydrofolate (THF) serving as the one-carbon carrier. This reaction serves as the major source of one-carbon groups required for the biosynthesis of purines, thymidylate, methionine, and other important biomolecules. Also exhibits THF-independent aldolase activity toward beta-hydroxyamino acids, producing glycine and aldehydes, via a retro-aldol mechanism. The protein is Serine hydroxymethyltransferase of Nostoc sp. (strain PCC 7120 / SAG 25.82 / UTEX 2576).